We begin with the raw amino-acid sequence, 587 residues long: Lamin-B1 (587 aa).

A compositionally biased stretch (polar residues) spans 1 to 11 (MATATPVQQRA). The tract at residues 1–29 (MATATPVQQRAGSRASAPATPFSPTRLSR) is disordered. Alanine 2 is subject to N-acetylalanine. The tract at residues 2 to 34 (ATATPVQQRAGSRASAPATPFSPTRLSRLQEKE) is head. Phosphothreonine occurs at positions 3 and 5. Arginine 14 carries the post-translational modification Omega-N-methylarginine. The residue at position 16 (serine 16) is a Phosphoserine. The residue at position 20 (threonine 20) is a Phosphothreonine. Serine 23 carries the phosphoserine modification. Threonine 25 is subject to Phosphothreonine. Serine 28 is subject to Phosphoserine. The region spanning 32–388 (EKEELRELND…KLLEGEEERL (357 aa)) is the IF rod domain. Positions 35 to 69 (ELRELNDRLAVYIDKVRSLETENSALQLQVTEREE) are coil 1A. The interval 70 to 81 (VRGRELTGLKAL) is linker 1. The segment at 82–215 (YETELADARR…EFRKNMYEEE (134 aa)) is coil 1B. Lysine 102 participates in a covalent cross-link: Glycyl lysine isopeptide (Lys-Gly) (interchain with G-Cter in SUMO2). Position 111 is an N6-acetyllysine (lysine 111). Lysine 123 is covalently cross-linked (Glycyl lysine isopeptide (Lys-Gly) (interchain with G-Cter in SUMO2)). Serine 126 is subject to Phosphoserine. Residue lysine 145 forms a Glycyl lysine isopeptide (Lys-Gly) (interchain with G-Cter in SUMO2) linkage. Lysine 157 is modified (N6-acetyllysine; alternate). Lysine 157 is covalently cross-linked (Glycyl lysine isopeptide (Lys-Gly) (interchain with G-Cter in SUMO2); alternate). Serine 158 is subject to Phosphoserine. A Glycyl lysine isopeptide (Lys-Gly) (interchain with G-Cter in SUMO2) cross-link involves residue lysine 181. Serine 200 and serine 232 each carry phosphoserine. A linker 2 region spans residues 216 to 243 (INETRRKHETRLVEVDSGRQIEYEYKLA). Residues lysine 241 and lysine 261 each participate in a glycyl lysine isopeptide (Lys-Gly) (interchain with G-Cter in SUMO2) cross-link. A coil 2 region spans residues 244–386 (QALHEMREQH…YRKLLEGEEE (143 aa)). At lysine 271 the chain carries N6-acetyllysine; alternate. Lysine 271 is covalently cross-linked (Glycyl lysine isopeptide (Lys-Gly) (interchain with G-Cter in SUMO2); alternate). Serine 278 and serine 302 each carry phosphoserine. Lysine 312 participates in a covalent cross-link: Glycyl lysine isopeptide (Lys-Gly) (interchain with G-Cter in SUMO2). At lysine 330 the chain carries N6-acetyllysine; alternate. Residue lysine 330 forms a Glycyl lysine isopeptide (Lys-Gly) (interchain with G-Cter in SUMO2); alternate linkage. A phosphoserine mark is found at serine 375 and serine 393. The segment at 387–587 (RLKLSPSPSS…RASNKSCAIM (201 aa)) is tail. Low complexity predominate over residues 390–409 (LSPSPSSRVTVSRASSSRSV). The interval 390–432 (LSPSPSSRVTVSRASSSRSVRTTRGKRKRVDVEESEASSSVSI) is disordered. Threonine 399 is a glycosylation site (O-linked (GlcNAc) threonine). Arginine 413 is modified (omega-N-methylarginine). The Nuclear localization signal motif lies at 415–420 (KRKRVD). In terms of domain architecture, LTD spans 430–546 (VSISHSASAT…EEVAQRSTVF (117 aa)). Lysine 483 bears the N6-acetyllysine mark. Residue lysine 532 forms a Glycyl lysine isopeptide (Lys-Gly) (interchain with G-Cter in SUMO2) linkage. Serine 534 is modified (phosphoserine). Lysine 547 is covalently cross-linked (Glycyl lysine isopeptide (Lys-Gly) (interchain with G-Cter in SUMO2)). A disordered region spans residues 550–587 (IPEEEEEEEEEPIGVPLEEERFHQQGTPRASNKSCAIM). A compositionally biased stretch (acidic residues) spans 551 to 561 (PEEEEEEEEEP). Residues 573 to 587 (QQGTPRASNKSCAIM) show a composition bias toward polar residues. Threonine 576 carries the phosphothreonine modification. A Cysteine methyl ester modification is found at cysteine 584. The S-farnesyl cysteine moiety is linked to residue cysteine 584. A propeptide spans 585–587 (AIM) (removed in mature form).

It belongs to the intermediate filament family. Homodimer. Lamin dimers then assemble into dimeric head-to-tail polymers. Ultimately, two head-to-tail polymers assemble laterally into a protofilament with a uniformly shaped rod of 3.5 nm in diameter. Interacts with SPAG4 and SEPT12. B-type lamins undergo a series of modifications, such as farnesylation and phosphorylation. Increased phosphorylation of the lamins occurs before envelope disintegration and probably plays a role in regulating lamin associations. In terms of processing, phosphorylation plays a key role in lamin organization, subcellular localization and nuclear envelope disintegration. Phosphorylation by CDK1 at Ser-23 and Ser-393 at the onset of mitosis drives lamin disassembly and nuclear envelope breakdown.

The protein resides in the nucleus lamina. Lamins are intermediate filament proteins that assemble into a filamentous meshwork, and which constitute the major components of the nuclear lamina, a fibrous layer on the nucleoplasmic side of the inner nuclear membrane. Lamins provide a framework for the nuclear envelope, bridging the nuclear envelope and chromatin, thereby playing an important role in nuclear assembly, chromatin organization, nuclear membrane and telomere dynamics. The structural integrity of the lamina is strictly controlled by the cell cycle, as seen by the disintegration and formation of the nuclear envelope in prophase and telophase, respectively. This is Lamin-B1 (Lmnb1) from Rattus norvegicus (Rat).